The sequence spans 556 residues: MAFTDLLDALGGVGRFQLVYTALLLLPCGLLACHTFLQNFTAAAPPHHCQHPANYTEPTTNVSGVWLRAAIPLNQHGDPEPCRRYVEPQWALLKPNASSHGVATEGCKDGWVYDRSIFPSTIVMEWDLVCEARTLRDLAQSIYMSGVLVGAALFGGLADRLGRKAPLVWSYLQLAVSGAATAYVGSFSAYCVFRFLMGMTFSGIILNSLSLVVEWMPTRGRTVAGILLGFSFTLGQLILAGVAYLIRPWRWLQFAVSAPFLVFFLYSWWLPESSRWLLLHGKAQQAVQNLQKVAMMNGRKAEGERLTTEVVSSYIQDEFASVRTSNSILDLFRTPAIRRVTCCLMGVWFSNSVAYYGLAMDLQKFGLSIYLVQALFGIIDIPAMLVATTTMIYVGRRATVSSFLILAGLMVIANMFMPEDLQTLRTVQAALGKGCLASSFICVYLFTGELYPTEIRQMGMGFASVNARLGGLVAPLITTLGEISPVLPPVSFGATSVLAGMAVACFLTETRNVPLVETIAAMERRVKQGRSKRDTEQKSEEISLQQLGASPLKETI.

Residues 1-15 lie on the Cytoplasmic side of the membrane; sequence MAFTDLLDALGGVGR. A helical membrane pass occupies residues 16–36; it reads FQLVYTALLLLPCGLLACHTF. Residues 37–137 lie on the Extracellular side of the membrane; that stretch reads LQNFTAAAPP…LVCEARTLRD (101 aa). Residues N39, N54, N61, and N96 are each glycosylated (N-linked (GlcNAc...) asparagine). Residues 138 to 158 form a helical membrane-spanning segment; the sequence is LAQSIYMSGVLVGAALFGGLA. At 159–166 the chain is on the cytoplasmic side; that stretch reads DRLGRKAP. Residues 167-187 traverse the membrane as a helical segment; that stretch reads LVWSYLQLAVSGAATAYVGSF. The Extracellular portion of the chain corresponds to 188-194; the sequence is SAYCVFR. Residues 195–215 form a helical membrane-spanning segment; it reads FLMGMTFSGIILNSLSLVVEW. Over 216 to 225 the chain is Cytoplasmic; it reads MPTRGRTVAG. A helical membrane pass occupies residues 226–246; sequence ILLGFSFTLGQLILAGVAYLI. The Extracellular portion of the chain corresponds to 247 to 250; it reads RPWR. The chain crosses the membrane as a helical span at residues 251–271; sequence WLQFAVSAPFLVFFLYSWWLP. The Cytoplasmic segment spans residues 272-339; that stretch reads ESSRWLLLHG…DLFRTPAIRR (68 aa). A helical membrane pass occupies residues 340–360; it reads VTCCLMGVWFSNSVAYYGLAM. The Extracellular segment spans residues 361-366; sequence DLQKFG. A helical transmembrane segment spans residues 367-387; it reads LSIYLVQALFGIIDIPAMLVA. Over 388 to 397 the chain is Cytoplasmic; sequence TTTMIYVGRR. A helical transmembrane segment spans residues 398–418; that stretch reads ATVSSFLILAGLMVIANMFMP. The Extracellular segment spans residues 419 to 425; that stretch reads EDLQTLR. Residues 426–446 traverse the membrane as a helical segment; it reads TVQAALGKGCLASSFICVYLF. The Cytoplasmic portion of the chain corresponds to 447–457; the sequence is TGELYPTEIRQ. A helical membrane pass occupies residues 458–478; that stretch reads MGMGFASVNARLGGLVAPLIT. Topologically, residues 479 to 485 are extracellular; it reads TLGEISP. Residues 486 to 506 traverse the membrane as a helical segment; sequence VLPPVSFGATSVLAGMAVACF. At 507–556 the chain is on the cytoplasmic side; that stretch reads LTETRNVPLVETIAAMERRVKQGRSKRDTEQKSEEISLQQLGASPLKETI. Over residues 526 to 541 the composition is skewed to basic and acidic residues; that stretch reads VKQGRSKRDTEQKSEE. A disordered region spans residues 526-556; the sequence is VKQGRSKRDTEQKSEEISLQQLGASPLKETI.

This sequence belongs to the major facilitator (TC 2.A.1) superfamily. Organic cation transporter (TC 2.A.1.19) family. Highly expressed in olfactory mucosa. Weakly expressed in testis. Not detected in heart, spleen, lung, kidney or brain.

It is found in the membrane. In terms of biological role, organic anion transporter that mediates the uptake of estrone sulfate. Inhibited by probenecid, propionate, 2-methylbutyrate, 3-methylbutyrate, benzoate, heptanoate and 2-ethylhaxanoate. May act as an odorant transporter. The chain is Solute carrier family 22 member 20 (Slc22a20) from Mus musculus (Mouse).